We begin with the raw amino-acid sequence, 139 residues long: Small ribosomal subunit protein uS12m (139 aa).

Residues 1–29 (MSWSGPLRGLNTSLTCGPALVPRLWATCS) constitute a mitochondrion transit peptide. The disordered stretch occupies residues 36-56 (MHRLGGPPKRPPQKLGPTEGR).

The protein belongs to the universal ribosomal protein uS12 family. In terms of assembly, component of the mitochondrial ribosome small subunit (28S) which comprises a 12S rRNA and about 30 distinct proteins.

Its subcellular location is the mitochondrion. In Pongo abelii (Sumatran orangutan), this protein is Small ribosomal subunit protein uS12m (MRPS12).